The chain runs to 208 residues: Thymidylate kinase (208 aa).

10 to 17 (GPEGSGKT) contacts ATP.

The protein belongs to the thymidylate kinase family.

The enzyme catalyses dTMP + ATP = dTDP + ADP. In terms of biological role, phosphorylation of dTMP to form dTDP in both de novo and salvage pathways of dTTP synthesis. The polypeptide is Thymidylate kinase (Bacillus cereus (strain 03BB102)).